Consider the following 220-residue polypeptide: Uracil-DNA glycosylase (220 aa).

The Proton acceptor role is filled by D61.

The protein belongs to the uracil-DNA glycosylase (UDG) superfamily. UNG family.

It is found in the cytoplasm. The catalysed reaction is Hydrolyzes single-stranded DNA or mismatched double-stranded DNA and polynucleotides, releasing free uracil.. Its function is as follows. Excises uracil residues from the DNA which can arise as a result of misincorporation of dUMP residues by DNA polymerase or due to deamination of cytosine. In Pseudoalteromonas translucida (strain TAC 125), this protein is Uracil-DNA glycosylase.